The sequence spans 382 residues: Lycopene beta-cyclase (382 aa).

NAD(+) is bound at residue D6 to D36.

Belongs to the lycopene cyclase family. FAD serves as cofactor.

The protein resides in the cell inner membrane. It carries out the reaction a carotenoid psi-end group = a carotenoid beta-end derivative. It catalyses the reaction all-trans-lycopene = gamma-carotene. The catalysed reaction is gamma-carotene = all-trans-beta-carotene. The enzyme catalyses all-trans-neurosporene = beta-zeacarotene. It carries out the reaction beta-zeacarotene = 7,8-dihydro-beta-carotene. It functions in the pathway carotenoid biosynthesis; beta-carotene biosynthesis. With respect to regulation, activity is increased in the presence of NAD(P)H. NADPH is not involved directly in the cyclization reaction, but must play an indirect role, e.g. as an allosteric activator. Its function is as follows. Catalyzes the double cyclization reaction which converts lycopene to beta-carotene. Also catalyzes the double cyclization reaction which converts neurosporene to 7,8-dihydro-beta-carotene via monocyclic beta-zeacarotene. May also convert zeta-carotene to bicyclic 7,8,7',8'-tetrahydro-beta-carotene. This Pantoea ananas (Erwinia uredovora) protein is Lycopene beta-cyclase.